We begin with the raw amino-acid sequence, 490 residues long: ATP synthase subunit beta (490 aa).

Residue 175–182 (GGAGVGKT) coordinates ATP.

This sequence belongs to the ATPase alpha/beta chains family. In terms of assembly, F-type ATPases have 2 components, CF(1) - the catalytic core - and CF(0) - the membrane proton channel. CF(1) has five subunits: alpha(3), beta(3), gamma(1), delta(1), epsilon(1). CF(0) has three main subunits: a(1), b(2) and c(9-12). The alpha and beta chains form an alternating ring which encloses part of the gamma chain. CF(1) is attached to CF(0) by a central stalk formed by the gamma and epsilon chains, while a peripheral stalk is formed by the delta and b chains.

It is found in the cell membrane. The catalysed reaction is ATP + H2O + 4 H(+)(in) = ADP + phosphate + 5 H(+)(out). Functionally, produces ATP from ADP in the presence of a proton gradient across the membrane. The catalytic sites are hosted primarily by the beta subunits. This chain is ATP synthase subunit beta, found in Acidothermus cellulolyticus (strain ATCC 43068 / DSM 8971 / 11B).